The chain runs to 174 residues: MAAANRGSKPRVRSIRFAAGHDAEGSQSHVHFDEKLHDSVVMVTQESDNSFLVKVGFLKILHRYEITFTLPAVRRLSKDIREAPVHSLHLKLLSVTPIPEGYSIKCEYSAHKEGVLKEEMLLACEGDIGTCVHVTVQARVMDRHHGTPMLLDGVKCVGAELEYDSEHSDWHGFD.

Ala-2 carries the N-acetylalanine modification. Thr-147 is subject to Phosphothreonine.

It belongs to the ADISSP family.

It is found in the secreted. In terms of biological role, adipocyte-secreted protein (adipokine) that acts as a key regulator for white adipose tissue (WAT) thermogenesis and glucose homeostasis at least in part through activation of protein kinase A (PKA). This chain is Adipose-secreted signaling protein, found in Rattus norvegicus (Rat).